The primary structure comprises 280 residues: 30 kDa immediate-early protein 2 (280 aa).

The disordered stretch occupies residues S36–D164. Low complexity-rich tracts occupy residues R47–T67, S90–D101, and A132–G147.

Its function is as follows. Activates the E1.7 promoter. This activation is augmented by the IE1 protein. It down-regulates the transcription of genes under the control of the major IE promoter. This is 30 kDa immediate-early protein 2 (UL122) from Human cytomegalovirus (strain Towne) (HHV-5).